The primary structure comprises 83 residues: MSSGGLLLLLGLLTLWEVLTPVSSKDRPEFCELPADPGPCNALSQAYYYNPVQHKCLKFRYGGCKANPNTFKTIEECKRTCAA.

An N-terminal signal peptide occupies residues 1–24 (MSSGGLLLLLGLLTLWEVLTPVSS). Residues 31–81 (CELPADPGPCNALSQAYYYNPVQHKCLKFRYGGCKANPNTFKTIEECKRTC) form the BPTI/Kunitz inhibitor domain. Disulfide bonds link cysteine 31–cysteine 81, cysteine 40–cysteine 64, and cysteine 56–cysteine 77.

Belongs to the venom Kunitz-type family. In terms of tissue distribution, expressed by the venom gland.

Its subcellular location is the secreted. Serine protease inhibitor. The protein is Kunitz-type serine protease inhibitor stephenin-1 of Hoplocephalus stephensii (Stephens's banded snake).